The sequence spans 454 residues: MAEFSQKRGKRRSDEGLGSMVDFLLANARLVLGVGGAAVLGIATLAVKRFIDRATSPRDEDDTKADSWKELSLLKATPHLQPRPPPAALSQPVLPLAPSSSAPEGPAETDPEVTPQLSSPAPLCLTLQERLLAFERDRVTIPAAQVALAKQLAGDIALELQAYFRSKFPELPFGAFVPGGPLYDGLQAGAADHVRLLVPLVLEPGLWSLVPGVDTVARDPRCWAVRRTQLEFCPRGSSPWDRFLVGGYLSSRVLLELLRKALAASVNWPAIGSLLGCLIRPSMASEELLLEVQHERLELTVAVLVAVPGVDADDRLLLAWPLEGLAGNLWLQDLYPVEAARLRALDDHDAGTRRRLLLLLCAVCRGCSALGQLGRGHLTQVVLRLGEDNVDWTEEALGERFLQALELLIGSLEQASLPCHFNPSVNLFSSLREEEIDDIGYALYSGLQEPEGLL.

Over 1–22 the chain is Mitochondrial intermembrane; sequence MAEFSQKRGKRRSDEGLGSMVD. At serine 13 the chain carries Phosphoserine. Residues 23-43 traverse the membrane as a helical segment; that stretch reads FLLANARLVLGVGGAAVLGIA. Topologically, residues 44 to 454 are cytoplasmic; sequence TLAVKRFIDR…SGLQEPEGLL (411 aa). The tract at residues 76-119 is disordered; the sequence is ATPHLQPRPPPAALSQPVLPLAPSSSAPEGPAETDPEVTPQLSS. Residues 88-103 show a composition bias toward low complexity; that stretch reads ALSQPVLPLAPSSSAP.

It belongs to the MID49/MID51 family. In terms of assembly, interacts with DNM1L. In terms of tissue distribution, expressed in all tissues tested with highest expression in heart and skeletal muscle.

Its subcellular location is the mitochondrion outer membrane. In terms of biological role, mitochondrial outer membrane protein involved in the regulation of mitochondrial organization. It is required for mitochondrial fission and promotes the recruitment and association of the fission mediator dynamin-related protein 1 (DNM1L) to the mitochondrial surface independently of the mitochondrial fission FIS1 and MFF proteins. Regulates DNM1L GTPase activity. This is Mitochondrial dynamics protein MID49 (MIEF2) from Homo sapiens (Human).